Here is a 427-residue protein sequence, read N- to C-terminus: tRNA(Ile)-lysidine synthase (427 aa).

25–30 serves as a coordination point for ATP; sequence SGGLDS.

It belongs to the tRNA(Ile)-lysidine synthase family.

The protein localises to the cytoplasm. It catalyses the reaction cytidine(34) in tRNA(Ile2) + L-lysine + ATP = lysidine(34) in tRNA(Ile2) + AMP + diphosphate + H(+). Its function is as follows. Ligates lysine onto the cytidine present at position 34 of the AUA codon-specific tRNA(Ile) that contains the anticodon CAU, in an ATP-dependent manner. Cytidine is converted to lysidine, thus changing the amino acid specificity of the tRNA from methionine to isoleucine. This Histophilus somni (strain 129Pt) (Haemophilus somnus) protein is tRNA(Ile)-lysidine synthase.